Consider the following 300-residue polypeptide: GTPase Era (300 aa).

Residues 5–176 (RSGFVCLIGR…IDVLAAALPP (172 aa)) form the Era-type G domain. The segment at 13–20 (GRPNTGKS) is G1. 13–20 (GRPNTGKS) contacts GTP. The G2 stretch occupies residues 39–43 (QTTRH). Positions 61-64 (DTPG) are G3. Residues 61-65 (DTPGL) and 125-128 (TKID) each bind GTP. A G4 region spans residues 125-128 (TKID). The G5 stretch occupies residues 155 to 157 (VSA). Residues 207–286 (VHDELPHSLA…YLDLHVNVAK (80 aa)) enclose the KH type-2 domain.

Belongs to the TRAFAC class TrmE-Era-EngA-EngB-Septin-like GTPase superfamily. Era GTPase family. In terms of assembly, monomer.

The protein resides in the cell envelope. It localises to the secreted. The protein localises to the cell wall. Functionally, exhibits GTPase activity. Binds RNA but is probably not involved in ribosome assembly in mycobacteria. The sequence is that of GTPase Era from Mycobacterium leprae (strain TN).